We begin with the raw amino-acid sequence, 473 residues long: Crt homolog 1 (473 aa).

Residues 1-49 lie on the Cytoplasmic side of the membrane; the sequence is MTNNDKEKQPLLSSINNEDDNGATINIVEPVPWYSNIPQKIKNSMSKET. Residues 50 to 70 form a helical membrane-spanning segment; it reads ITILIYVVLYVTSGVINSVLL. Over 71 to 80 the chain is Vacuolar; the sequence is KKVMNKFTNY. A helical membrane pass occupies residues 81 to 101; that stretch reads AFFLSQLTNFGYVPIFGAVTA. The Cytoplasmic segment spans residues 102–121; that stretch reads YKIFFTKDIPQETRDFPTRK. Residues 122-142 traverse the membrane as a helical segment; it reads FAIMGALDAITGFFVVIGGVS. Residues 143-146 are Vacuolar-facing; it reads TSGP. A helical transmembrane segment spans residues 147 to 167; the sequence is LQQLLNQAIIPFTMIASFIFL. Residues 168-175 lie on the Cytoplasmic side of the membrane; it reads KERYSLIQ. The helical transmembrane segment at 176-196 threads the bilayer; sequence LGGALVIIGGVVTSLIPSLLG. The Vacuolar segment spans residues 197–207; the sequence is GSSGGNKPFWN. Residues 208–228 traverse the membrane as a helical segment; it reads FFYLLSVIPGALSNVYKDIGF. At 229-248 the chain is on the cytoplasmic side; the sequence is QAVADMDVWYLQYWDSLYQS. A helical transmembrane segment spans residues 249–269; it reads IFGLFLFPVNNWLPPPATVKF. Over 270–322 the chain is Vacuolar; it reads EQILPFMKEGAECLAGINSIIPSYINGTSSFTATSCTYAPDATITCDDCHNAW. An N-linked (GlcNAc...) asparagine glycan is attached at asparagine 295. The helical transmembrane segment at 323-343 threads the bilayer; that stretch reads IVIILYMTINIIYNIFILLVL. Residues 344–352 lie on the Cytoplasmic side of the membrane; that stretch reads KHAGATVYS. Residues 353 to 373 traverse the membrane as a helical segment; that stretch reads IANTLRLPLTNIVFSIHFIMG. Residue serine 374 is a topological domain, vacuolar. A helical transmembrane segment spans residues 375 to 395; the sequence is AVSPFSGLSVAGLVIILVGLG. Residues 396 to 473 are Cytoplasmic-facing; the sequence is GYRVGSMIKQ…AANNNNYGDA (78 aa).

This sequence belongs to the CRT-like transporter family.

The protein localises to the vacuole membrane. In terms of biological role, nutrient transporter. Involved in maintaining the osmotic homeostasis of the digestive vacuole. The sequence is that of Crt homolog 1 (crtp1) from Dictyostelium discoideum (Social amoeba).